Reading from the N-terminus, the 508-residue chain is MAP kinase kinase MKK1/SSP32 (508 aa).

3 disordered regions span residues 1–21 (MASL…PRLK), 35–95 (IYLT…LSIN), and 130–158 (ELSG…YLRN). The segment covering 35 to 47 (IYLTSNGSSTTAY) has biased composition (polar residues). The segment covering 48 to 66 (SSHTPEPLTSSTSTLFSQT) has biased composition (low complexity). Polar residues-rich tracts occupy residues 67–79 (RLHP…TLNT) and 131–158 (LSGN…YLRN). The residue at position 192 (S192) is a Phosphoserine. A Protein kinase domain is found at 221–488 (IETLGILGEG…PRQMINHPWI (268 aa)). Residues 227 to 235 (LGEGAGGSV) and K250 contribute to the ATP site. D349 acts as the Proton acceptor in catalysis.

This sequence belongs to the protein kinase superfamily. STE Ser/Thr protein kinase family. MAP kinase kinase subfamily.

The catalysed reaction is L-seryl-[protein] + ATP = O-phospho-L-seryl-[protein] + ADP + H(+). It carries out the reaction L-threonyl-[protein] + ATP = O-phospho-L-threonyl-[protein] + ADP + H(+). It catalyses the reaction L-tyrosyl-[protein] + ATP = O-phospho-L-tyrosyl-[protein] + ADP + H(+). Involved in a signal transduction pathway that play a role in yeast cell morphogenesis and cell growth. This pathway seems to start by SMP3; then involve the kinase PKC1 that may act on the BCK1 kinase that then phosphorylates MKK1 and MKK2 which themselves phosphorylate the MPK1 kinase. This Saccharomyces cerevisiae (strain ATCC 204508 / S288c) (Baker's yeast) protein is MAP kinase kinase MKK1/SSP32 (MKK1).